Consider the following 452-residue polypeptide: Exodeoxyribonuclease 7 large subunit (452 aa).

Belongs to the XseA family. As to quaternary structure, heterooligomer composed of large and small subunits.

The protein localises to the cytoplasm. The catalysed reaction is Exonucleolytic cleavage in either 5'- to 3'- or 3'- to 5'-direction to yield nucleoside 5'-phosphates.. Bidirectionally degrades single-stranded DNA into large acid-insoluble oligonucleotides, which are then degraded further into small acid-soluble oligonucleotides. The sequence is that of Exodeoxyribonuclease 7 large subunit from Bacillus cereus (strain B4264).